A 117-amino-acid polypeptide reads, in one-letter code: Large ribosomal subunit protein uL18 (117 aa).

It belongs to the universal ribosomal protein uL18 family. In terms of assembly, part of the 50S ribosomal subunit; part of the 5S rRNA/L5/L18/L25 subcomplex. Contacts the 5S and 23S rRNAs.

In terms of biological role, this is one of the proteins that bind and probably mediate the attachment of the 5S RNA into the large ribosomal subunit, where it forms part of the central protuberance. The polypeptide is Large ribosomal subunit protein uL18 (Blochmanniella floridana).